The sequence spans 251 residues: Glutamate 5-kinase (251 aa).

An ATP-binding site is contributed by lysine 7. 3 residues coordinate substrate: serine 45, aspartate 130, and asparagine 142. Residues 162–163 and 204–210 contribute to the ATP site; these read SD and TGGIVTK.

Belongs to the glutamate 5-kinase family.

It is found in the cytoplasm. The catalysed reaction is L-glutamate + ATP = L-glutamyl 5-phosphate + ADP. It participates in amino-acid biosynthesis; L-proline biosynthesis; L-glutamate 5-semialdehyde from L-glutamate: step 1/2. Its function is as follows. Catalyzes the transfer of a phosphate group to glutamate to form L-glutamate 5-phosphate. The protein is Glutamate 5-kinase of Campylobacter jejuni subsp. jejuni serotype O:6 (strain 81116 / NCTC 11828).